Reading from the N-terminus, the 525-residue chain is Putative ribose/galactose/methyl galactoside import ATP-binding protein (525 aa).

The disordered stretch occupies residues methionine 1–glycine 20. ABC transporter domains follow at residues leucine 33 to glutamate 269 and lysine 279 to arginine 523. Glycine 65 to serine 72 is a binding site for ATP.

The protein belongs to the ABC transporter superfamily. Carbohydrate importer 2 (CUT2) (TC 3.A.1.2) family.

The protein localises to the cell inner membrane. The enzyme catalyses D-ribose(out) + ATP + H2O = D-ribose(in) + ADP + phosphate + H(+). It catalyses the reaction D-galactose(out) + ATP + H2O = D-galactose(in) + ADP + phosphate + H(+). Its function is as follows. Part of an ABC transporter complex involved in carbohydrate import. Could be involved in ribose, galactose and/or methyl galactoside import. Responsible for energy coupling to the transport system. This Pseudomonas syringae pv. tomato (strain ATCC BAA-871 / DC3000) protein is Putative ribose/galactose/methyl galactoside import ATP-binding protein.